The primary structure comprises 424 residues: Serpin A11 (424 aa).

Positions 1–21 (MGPVWLWLWLLVAEVLLPVHC) are cleaved as a signal peptide. 4 N-linked (GlcNAc...) asparagine glycosylation sites follow: Asn-108, Asn-171, Asn-352, and Asn-387.

The protein belongs to the serpin family.

It localises to the secreted. This Mus musculus (Mouse) protein is Serpin A11 (Serpina11).